We begin with the raw amino-acid sequence, 242 residues long: Acetoacetyl-CoA reductase (242 aa).

NADP(+) is bound by residues 12 to 14 (RGI) and 82 to 86 (NAGIT). Substrate is bound by residues Asp-88 and 141-144 (QAGQ). Tyr-147 serves as the catalytic Proton acceptor. 177 to 180 (PGYI) provides a ligand contact to NADP(+). 178-179 (GY) is a substrate binding site.

Belongs to the short-chain dehydrogenases/reductases (SDR) family.

The protein resides in the cytoplasm. It catalyses the reaction a (3R)-3-hydroxyacyl-CoA + NADP(+) = a 3-oxoacyl-CoA + NADPH + H(+). It functions in the pathway biopolymer metabolism; poly-(R)-3-hydroxybutanoate biosynthesis. The sequence is that of Acetoacetyl-CoA reductase (phaB) from Paracoccus denitrificans.